The following is a 311-amino-acid chain: Acetyl-coenzyme A carboxylase carboxyl transferase subunit alpha (311 aa).

Positions 36-286 (ELKKEVERVY…VNYFLKSLEE (251 aa)) constitute a CoA carboxyltransferase C-terminal domain.

This sequence belongs to the AccA family. Acetyl-CoA carboxylase is a heterohexamer composed of biotin carboxyl carrier protein (AccB), biotin carboxylase (AccC) and two subunits each of ACCase subunit alpha (AccA) and ACCase subunit beta (AccD).

The protein localises to the cytoplasm. It catalyses the reaction N(6)-carboxybiotinyl-L-lysyl-[protein] + acetyl-CoA = N(6)-biotinyl-L-lysyl-[protein] + malonyl-CoA. It functions in the pathway lipid metabolism; malonyl-CoA biosynthesis; malonyl-CoA from acetyl-CoA: step 1/1. In terms of biological role, component of the acetyl coenzyme A carboxylase (ACC) complex. First, biotin carboxylase catalyzes the carboxylation of biotin on its carrier protein (BCCP) and then the CO(2) group is transferred by the carboxyltransferase to acetyl-CoA to form malonyl-CoA. This is Acetyl-coenzyme A carboxylase carboxyl transferase subunit alpha from Wolinella succinogenes (strain ATCC 29543 / DSM 1740 / CCUG 13145 / JCM 31913 / LMG 7466 / NCTC 11488 / FDC 602W) (Vibrio succinogenes).